The chain runs to 39 residues: Photosystem II reaction center protein J (39 aa).

A helical membrane pass occupies residues 9–29 (LWIIATFGGIAALTVVGLFIY).

Belongs to the PsbJ family. In terms of assembly, PSII is composed of 1 copy each of membrane proteins PsbA, PsbB, PsbC, PsbD, PsbE, PsbF, PsbH, PsbI, PsbJ, PsbK, PsbL, PsbM, PsbT, PsbX, PsbY, PsbZ, Psb30/Ycf12, at least 3 peripheral proteins of the oxygen-evolving complex and a large number of cofactors. It forms dimeric complexes.

It localises to the plastid. It is found in the chloroplast thylakoid membrane. Functionally, one of the components of the core complex of photosystem II (PSII). PSII is a light-driven water:plastoquinone oxidoreductase that uses light energy to abstract electrons from H(2)O, generating O(2) and a proton gradient subsequently used for ATP formation. It consists of a core antenna complex that captures photons, and an electron transfer chain that converts photonic excitation into a charge separation. The sequence is that of Photosystem II reaction center protein J from Guillardia theta (Cryptophyte).